The primary structure comprises 225 residues: Perlwapin-like protein (225 aa).

An N-terminal signal peptide occupies residues Met1 to Gly19. 4 cysteine pairs are disulfide-bonded: Cys27/Cys57, Cys36/Cys61, Cys43/Cys56, and Cys49/Cys65. Residues Cys27–Lys68 form the WAP 1; atypical domain. Asn67 is a glycosylation site (N-linked (GlcNAc...) asparagine). The 53-residue stretch at Ile117–Ile169 folds into the WAP 2 domain. 4 cysteine pairs are disulfide-bonded: Cys125–Cys157, Cys135–Cys161, Cys143–Cys156, and Cys149–Cys165. Residue Asn170 is glycosylated (N-linked (GlcNAc...) asparagine). The interval Gln176–Thr225 is disordered. A compositionally biased stretch (low complexity) spans Leu188–Pro201. Over residues Ser203–Pro212 the composition is skewed to pro residues. Over residues Ser213–Thr225 the composition is skewed to polar residues.

In terms of tissue distribution, component of the acid-soluble organic matrix of calcified layers of the shell (at protein level).

Its subcellular location is the secreted. The polypeptide is Perlwapin-like protein (Lottia gigantea (Giant owl limpet)).